A 117-amino-acid polypeptide reads, in one-letter code: G antigen 1 (117 aa).

The interval 1 to 117 (MSWRGRSTYY…PEEGEGQSQC (117 aa)) is disordered. 2 stretches are compositionally biased toward acidic residues: residues 32–45 (FSDE…EEGE) and 87–96 (ECEDGPDGQE).

The protein belongs to the GAGE family. Expressed in a variety of tumor tissues but not in normal tissues, except testis.

In terms of biological role, antigen, recognized on melanoma by autologous cytolytic T-lymphocytes. The sequence is that of G antigen 1 from Homo sapiens (Human).